Here is a 386-residue protein sequence, read N- to C-terminus: Aspartate carbamoyltransferase 1, chloroplastic (386 aa).

Residues Met1–Cys39 constitute a chloroplast transit peptide. Positions 132 and 133 each coordinate carbamoyl phosphate. Positions 132 and 133 each coordinate UMP. Position 162 (Lys162) interacts with L-aspartate. Residues Arg183, His211, and Gln214 each contribute to the carbamoyl phosphate site. UMP contacts are provided by Arg183 and His211. The UMP site is built by Arg244 and Arg306. L-aspartate contacts are provided by Arg244 and Arg306. Carbamoyl phosphate contacts are provided by Leu346 and Pro347.

The protein belongs to the aspartate/ornithine carbamoyltransferase superfamily. ATCase family. In terms of assembly, homotrimer.

The protein resides in the plastid. It is found in the chloroplast. It catalyses the reaction carbamoyl phosphate + L-aspartate = N-carbamoyl-L-aspartate + phosphate + H(+). It functions in the pathway pyrimidine metabolism; UMP biosynthesis via de novo pathway; (S)-dihydroorotate from bicarbonate: step 2/3. With respect to regulation, feedback inhibited by UMP. Functionally, catalyzes the condensation of carbamoyl phosphate and aspartate to form carbamoyl aspartate and inorganic phosphate, the committed step in the de novo pyrimidine nucleotide biosynthesis pathway. The sequence is that of Aspartate carbamoyltransferase 1, chloroplastic (PYRB1) from Pisum sativum (Garden pea).